The sequence spans 283 residues: Phosphatidylglycerol--prolipoprotein diacylglyceryl transferase (283 aa).

The next 4 membrane-spanning stretches (helical) occupy residues 17-37 (LAVR…TFLG), 56-76 (FLTW…VLFY), 92-112 (WEGG…IWLF), and 117-137 (GIGF…GLAS). Arg-139 serves as a coordination point for a 1,2-diacyl-sn-glycero-3-phospho-(1'-sn-glycerol). The next 3 membrane-spanning stretches (helical) occupy residues 194 to 214 (PSQL…VWLF), 222 to 242 (GQVA…AEFA), and 255 to 275 (GLSM…VGFV).

It belongs to the Lgt family.

The protein localises to the cell inner membrane. The enzyme catalyses L-cysteinyl-[prolipoprotein] + a 1,2-diacyl-sn-glycero-3-phospho-(1'-sn-glycerol) = an S-1,2-diacyl-sn-glyceryl-L-cysteinyl-[prolipoprotein] + sn-glycerol 1-phosphate + H(+). The protein operates within protein modification; lipoprotein biosynthesis (diacylglyceryl transfer). In terms of biological role, catalyzes the transfer of the diacylglyceryl group from phosphatidylglycerol to the sulfhydryl group of the N-terminal cysteine of a prolipoprotein, the first step in the formation of mature lipoproteins. This Neisseria meningitidis serogroup C (strain 053442) protein is Phosphatidylglycerol--prolipoprotein diacylglyceryl transferase.